The sequence spans 99 residues: Small ribosomal subunit protein bS16 (99 aa).

The disordered stretch occupies residues 80–99 (PPRQQNEAKRETAETAQPEA).

Belongs to the bacterial ribosomal protein bS16 family.

The protein is Small ribosomal subunit protein bS16 of Thermomicrobium roseum (strain ATCC 27502 / DSM 5159 / P-2).